The following is a 131-amino-acid chain: Holo-[acyl-carrier-protein] synthase (131 aa).

Mg(2+) contacts are provided by Asp-8 and Glu-57.

The protein belongs to the P-Pant transferase superfamily. AcpS family. Mg(2+) is required as a cofactor.

The protein localises to the cytoplasm. It carries out the reaction apo-[ACP] + CoA = holo-[ACP] + adenosine 3',5'-bisphosphate + H(+). Functionally, transfers the 4'-phosphopantetheine moiety from coenzyme A to a Ser of acyl-carrier-protein. This Thiobacillus denitrificans (strain ATCC 25259 / T1) protein is Holo-[acyl-carrier-protein] synthase.